Consider the following 511-residue polypeptide: Maturase K (511 aa).

The protein belongs to the intron maturase 2 family. MatK subfamily.

Its subcellular location is the plastid. It is found in the chloroplast. Usually encoded in the trnK tRNA gene intron. Probably assists in splicing its own and other chloroplast group II introns. This is Maturase K from Melica altissima (Siberian melic grass).